An 88-amino-acid polypeptide reads, in one-letter code: Small ribosomal subunit protein uS15 (88 aa).

The protein belongs to the universal ribosomal protein uS15 family. As to quaternary structure, part of the 30S ribosomal subunit. Forms a bridge to the 50S subunit in the 70S ribosome, contacting the 23S rRNA.

Its function is as follows. One of the primary rRNA binding proteins, it binds directly to 16S rRNA where it helps nucleate assembly of the platform of the 30S subunit by binding and bridging several RNA helices of the 16S rRNA. Functionally, forms an intersubunit bridge (bridge B4) with the 23S rRNA of the 50S subunit in the ribosome. In Halothermothrix orenii (strain H 168 / OCM 544 / DSM 9562), this protein is Small ribosomal subunit protein uS15.